The following is a 135-amino-acid chain: HTH-type transcriptional regulator DicA (135 aa).

The HTH cro/C1-type domain maps to 12-66 (IRYRRKNLKHTQRSLAKALKISHVSVSQWERGDSEPTGKNLFALSKVLQCSPTWI). The segment at residues 23 to 42 (QRSLAKALKISHVSVSQWER) is a DNA-binding region (H-T-H motif).

Its function is as follows. This protein is a repressor of division inhibition gene dicB. This chain is HTH-type transcriptional regulator DicA (dicA), found in Escherichia coli (strain K12).